The chain runs to 94 residues: Co-chaperonin GroES (94 aa).

The protein belongs to the GroES chaperonin family. In terms of assembly, heptamer of 7 subunits arranged in a ring. Interacts with the chaperonin GroEL.

The protein resides in the cytoplasm. Together with the chaperonin GroEL, plays an essential role in assisting protein folding. The GroEL-GroES system forms a nano-cage that allows encapsulation of the non-native substrate proteins and provides a physical environment optimized to promote and accelerate protein folding. GroES binds to the apical surface of the GroEL ring, thereby capping the opening of the GroEL channel. The sequence is that of Co-chaperonin GroES from Latilactobacillus sakei subsp. sakei (strain 23K) (Lactobacillus sakei subsp. sakei).